The chain runs to 351 residues: Cytosolic sulfotransferase 9 (351 aa).

Residues 1–11 (MDEKDILRNLR) are compositionally biased toward basic and acidic residues. Residues 1–24 (MDEKDILRNLREEEEEEEENQSEE) form a disordered region. A compositionally biased stretch (acidic residues) spans 12–22 (EEEEEEEENQS). Residue 80 to 85 (KSGTTW) participates in 3'-phosphoadenylyl sulfate binding. Catalysis depends on His-152, which acts as the Proton acceptor. 3'-phosphoadenylyl sulfate is bound by residues Arg-174, Ser-182, Tyr-252, and 317–319 (RKG).

The protein belongs to the sulfotransferase 1 family. In terms of tissue distribution, expressed in roots and leaves.

It localises to the cytoplasm. In terms of biological role, sulfotransferase that utilizes 3'-phospho-5'-adenylyl sulfate (PAPS) as sulfonate donor. No activity with brassinosteroids. The protein is Cytosolic sulfotransferase 9 (STO9) of Arabidopsis thaliana (Mouse-ear cress).